Here is a 386-residue protein sequence, read N- to C-terminus: Methionine aminotransferase (386 aa).

Lys236 is subject to N6-(pyridoxal phosphate)lysine.

The protein belongs to the class-I pyridoxal-phosphate-dependent aminotransferase family. Homodimer. The cofactor is pyridoxal 5'-phosphate.

Its subcellular location is the cytoplasm. It carries out the reaction a 2-oxocarboxylate + L-methionine = 4-methylsulfanyl-2-oxobutanoate + an L-alpha-amino acid. Functionally, shows aminotransferase activity with methionine and histidine as substrates, and to a lesser extent also with phenylalanine. In Escherichia coli (strain K12), this protein is Methionine aminotransferase (ybdL).